The sequence spans 570 residues: Pantothenate kinase 2, mitochondrial (570 aa).

Residues 1–31 (MRRLGPFHPRVHWAAPPSLSSGLHRLLFLRG) constitute a mitochondrion transit peptide. Disordered regions lie at residues 34–94 (IPSS…PRAR) and 127–198 (GRLG…SVSR). Positions 82 to 94 (RWRNGRGGRPRAR) match the Nucleolar localization signal motif. Residues 84-93 (RNGRGGRPRA) are compositionally biased toward basic residues. Residues 155–164 (PEGRRQEPLR) show a composition bias toward basic and acidic residues. Ser168, Ser169, and Ser189 each carry phosphoserine. Positions 168–179 (SSASVPAVGASA) are enriched in low complexity. The short motif at 268-275 (LELKDLTL) is the Nuclear export signal element. The active-site Proton acceptor is the Glu338. Ser392, Ser395, and Arg407 together coordinate acetyl-CoA.

The protein belongs to the type II pantothenate kinase family. As to quaternary structure, homodimer. Synthesized as a 62-kDa precursor which is proteolytically processed by the mitochondrial-processing peptidase (MPP) via a 59-kDa intermediate to yield the mature mitochondrial 48-kDa subunit. Expressed in the brain (at protein level). Ubiquitous. Highly expressed in the testis. Expressed in the umbilical vein endothelial cells (HUVEC).

The protein localises to the mitochondrion. It is found in the mitochondrion intermembrane space. The protein resides in the nucleus. It localises to the cytoplasm. It catalyses the reaction (R)-pantothenate + ATP = (R)-4'-phosphopantothenate + ADP + H(+). Its pathway is cofactor biosynthesis; coenzyme A biosynthesis; CoA from (R)-pantothenate: step 1/5. Strongly inhibited by acetyl-CoA and its thioesters. Activated by palmitoylcarnitine. Functionally, mitochondrial isoform that catalyzes the phosphorylation of pantothenate to generate 4'-phosphopantothenate in the first and rate-determining step of coenzyme A (CoA) synthesis. Required for angiogenic activity of umbilical vein of endothelial cells (HUVEC). In terms of biological role, cytoplasmic isoform that catalyzes the phosphorylation of pantothenate to generate 4'-phosphopantothenate in the first and rate-determining step of coenzyme A (CoA) synthesis. The chain is Pantothenate kinase 2, mitochondrial (PANK2) from Homo sapiens (Human).